The chain runs to 251 residues: Aspartate/glutamate leucyltransferase (251 aa).

It belongs to the R-transferase family. Bpt subfamily.

It localises to the cytoplasm. It catalyses the reaction N-terminal L-glutamyl-[protein] + L-leucyl-tRNA(Leu) = N-terminal L-leucyl-L-glutamyl-[protein] + tRNA(Leu) + H(+). It carries out the reaction N-terminal L-aspartyl-[protein] + L-leucyl-tRNA(Leu) = N-terminal L-leucyl-L-aspartyl-[protein] + tRNA(Leu) + H(+). Functions in the N-end rule pathway of protein degradation where it conjugates Leu from its aminoacyl-tRNA to the N-termini of proteins containing an N-terminal aspartate or glutamate. The sequence is that of Aspartate/glutamate leucyltransferase from Xanthomonas oryzae pv. oryzae (strain KACC10331 / KXO85).